The sequence spans 95 residues: Small ribosomal subunit protein bS6 (95 aa).

This sequence belongs to the bacterial ribosomal protein bS6 family.

In terms of biological role, binds together with bS18 to 16S ribosomal RNA. The polypeptide is Small ribosomal subunit protein bS6 (rpsF) (Halalkalibacterium halodurans (strain ATCC BAA-125 / DSM 18197 / FERM 7344 / JCM 9153 / C-125) (Bacillus halodurans)).